The chain runs to 239 residues: Phosphoribosylaminoimidazole-succinocarboxamide synthase (239 aa).

This sequence belongs to the SAICAR synthetase family.

The catalysed reaction is 5-amino-1-(5-phospho-D-ribosyl)imidazole-4-carboxylate + L-aspartate + ATP = (2S)-2-[5-amino-1-(5-phospho-beta-D-ribosyl)imidazole-4-carboxamido]succinate + ADP + phosphate + 2 H(+). It functions in the pathway purine metabolism; IMP biosynthesis via de novo pathway; 5-amino-1-(5-phospho-D-ribosyl)imidazole-4-carboxamide from 5-amino-1-(5-phospho-D-ribosyl)imidazole-4-carboxylate: step 1/2. This chain is Phosphoribosylaminoimidazole-succinocarboxamide synthase, found in Bacillus thuringiensis subsp. konkukian (strain 97-27).